Here is a 481-residue protein sequence, read N- to C-terminus: MREYEAVIGLEVHVELKTNTKIFCNCSTEFGGDPNSHVCPVCLGLPGVLPVLNKKVVDYAIKAALALNCEVAEYCKFDRKNYYYPDLPKNYQISQYDLPLAKNGYLEIEVDGQVKRIGITRIHMEEDAGKLVHQGNLAVTPYSLVDYNRTGVPLIEIVSAPDIRTPEEARLYLEKLKAIIQYTGISDCRMEEGSLRCDANVSVRPKGQKEFGTKTEIKNMNSFKALQKALEYEIARQIEILEEGGRIIQETRMWDESRQVTLSMRSKEEAHDYRYFPEPDLPPVVIDREWLEEIRATLPELPDARKKRFVEQYGLTPYDAHVLTLTRELADYYEEAAKGYSNPKAVANWVINELLRLLNAAGKEITECPIKPEQITKMLELLDKGTISGKIAKTVFEEMFSSGKDPEVIVKEKGLVQITDLGELEAVVDKVIAANPKAVEDYKNGKEKALGFLVGQIMKETRGRANPEAVNQLLRDKLAKL.

It belongs to the GatB/GatE family. GatB subfamily. Heterotrimer of A, B and C subunits.

The enzyme catalyses L-glutamyl-tRNA(Gln) + L-glutamine + ATP + H2O = L-glutaminyl-tRNA(Gln) + L-glutamate + ADP + phosphate + H(+). The catalysed reaction is L-aspartyl-tRNA(Asn) + L-glutamine + ATP + H2O = L-asparaginyl-tRNA(Asn) + L-glutamate + ADP + phosphate + 2 H(+). In terms of biological role, allows the formation of correctly charged Asn-tRNA(Asn) or Gln-tRNA(Gln) through the transamidation of misacylated Asp-tRNA(Asn) or Glu-tRNA(Gln) in organisms which lack either or both of asparaginyl-tRNA or glutaminyl-tRNA synthetases. The reaction takes place in the presence of glutamine and ATP through an activated phospho-Asp-tRNA(Asn) or phospho-Glu-tRNA(Gln). The polypeptide is Aspartyl/glutamyl-tRNA(Asn/Gln) amidotransferase subunit B (Carboxydothermus hydrogenoformans (strain ATCC BAA-161 / DSM 6008 / Z-2901)).